A 461-amino-acid polypeptide reads, in one-letter code: General transcription and DNA repair factor IIH subunit SSL1 (461 aa).

Residues 1–70 (MAPVVISESE…RLSNRNLQGS (70 aa)) form a disordered region. Residues 26-37 (VHFDGEGDDRVD) are compositionally biased toward basic and acidic residues. Residues 53 to 63 (HVQRKKKKRLS) are compositionally biased toward basic residues. The 180-residue stretch at 125-304 (SLILTLDCSE…THLKELFNEA (180 aa)) folds into the VWFA domain. Residues 349-366 (CPNCHSKVCSLPTVCPCC) form a C4-type zinc finger.

The protein belongs to the GTF2H2 family. In terms of assembly, component of the 7-subunit TFIIH core complex composed of XPB/SSL2, XPD/RAD3, SSL1, TFB1, TFB2, TFB4 and TFB5, which is active in NER. The core complex associates with the 3-subunit CTD-kinase module TFIIK composed of CCL1, KIN28 and TFB3 to form the 10-subunit holoenzyme (holo-TFIIH) active in transcription. An additionnal subunit, TFB6, plays a role in the dissociation of the SSL2 helicase from TFIIH after transcription initiation.

It is found in the nucleus. Functionally, component of the general transcription and DNA repair factor IIH (TFIIH) core complex, which is involved in general and transcription-coupled nucleotide excision repair (NER) of damaged DNA and, when complexed to TFIIK, in RNA transcription by RNA polymerase II. In NER, TFIIH acts by opening DNA around the lesion to allow the excision of the damaged oligonucleotide and its replacement by a new DNA fragment. In transcription, TFIIH has an essential role in transcription initiation. When the pre-initiation complex (PIC) has been established, TFIIH is required for promoter opening and promoter escape. Phosphorylation of the C-terminal tail (CTD) of the largest subunit of RNA polymerase II by the kinase module TFIIK controls the initiation of transcription. The polypeptide is General transcription and DNA repair factor IIH subunit SSL1 (SSL1) (Saccharomyces cerevisiae (strain ATCC 204508 / S288c) (Baker's yeast)).